A 323-amino-acid chain; its full sequence is Aldo-keto reductase family 1 member C23-like protein (323 aa).

NADP(+) is bound at residue 20–24; the sequence is GFGTY. Lys-31 serves as a coordination point for substrate. Asp-50 contacts NADP(+). Tyr-55 functions as the Proton donor in the catalytic mechanism. Position 117 (His-117) interacts with substrate. NADP(+)-binding positions include 166-167, Gln-190, 216-222, and 270-280; these read SN, YGALGTQ, and KSYNEKRIKEN.

This sequence belongs to the aldo/keto reductase family. In terms of assembly, monomer. Detected in endometrium surface epithelium (at protein level). Detected in endometrium.

The protein resides in the cytoplasm. Functionally, NADP-dependent oxidoreductase involved in steroid metabolism. May act on various hydroxysteroids. This Equus caballus (Horse) protein is Aldo-keto reductase family 1 member C23-like protein (PGFS).